Consider the following 163-residue polypeptide: Choriogonadotropin subunit beta (163 aa).

Positions methionine 1 to alanine 20 are cleaved as a signal peptide. 6 disulfide bridges follow: cysteine 29–cysteine 76, cysteine 43–cysteine 91, cysteine 46–cysteine 129, cysteine 54–cysteine 107, cysteine 58–cysteine 109, and cysteine 112–cysteine 119. An N-linked (GlcNAc...) asparagine glycan is attached at asparagine 50. N-linked (GlcNAc...) asparagine glycosylation is present at asparagine 124. Positions glutamine 135–glutamine 151 are enriched in polar residues. The tract at residues glutamine 135 to glutamine 163 is disordered. An O-linked (GalNAc...) serine glycan is attached at serine 139. Asparagine 145 carries N-linked (GlcNAc...) asparagine glycosylation. An O-linked (GalNAc...) serine glycan is attached at serine 150.

Belongs to the glycoprotein hormones subunit beta family. In terms of assembly, heterodimer of a common alpha chain and a unique beta chain which confers biological specificity to thyrotropin, lutropin, follitropin and gonadotropin.

The protein localises to the secreted. Stimulates the ovaries to synthesize the steroids that are essential for the maintenance of pregnancy. This Saimiri boliviensis boliviensis (Bolivian squirrel monkey) protein is Choriogonadotropin subunit beta (CGB).